A 30-amino-acid polypeptide reads, in one-letter code: Trypsin inhibitor 4 (30 aa).

3 disulfides stabilise this stretch: Cys3–Cys20, Cys10–Cys22, and Cys16–Cys29.

This sequence belongs to the protease inhibitor I7 (squash-type serine protease inhibitor) family.

The protein localises to the secreted. Its function is as follows. Inhibits trypsin. The polypeptide is Trypsin inhibitor 4 (Cucumis sativus (Cucumber)).